The primary structure comprises 99 residues: MMNMQNMMRQAQKLQKQMEQSQAELAAMQFVGKSAQDLVQATLTGDKKVVSIDFNPAVVDPEDLETLSDMTVQAINSALEQIDETTKKKLGAFAGKLPF.

This sequence belongs to the YbaB/EbfC family. In terms of assembly, homodimer.

It is found in the cytoplasm. It localises to the nucleoid. Binds to DNA and alters its conformation. May be involved in regulation of gene expression, nucleoid organization and DNA protection. The chain is Nucleoid-associated protein SPN23F10240 from Streptococcus pneumoniae (strain ATCC 700669 / Spain 23F-1).